The sequence spans 192 residues: Transposon Tn552 DNA-invertase BinR (192 aa).

The Resolvase/invertase-type recombinase catalytic domain maps to 1–136 (MKIGYARVST…AGRIAARARG (136 aa)). Residue serine 9 is the O-(5'-phospho-DNA)-serine intermediate of the active site. The H-T-H motif DNA-binding region spans 163-182 (IKTIAEQWKVSRTTIYRYLN).

The protein belongs to the site-specific recombinase resolvase family.

Functionally, DNA-invertase, mediating the inversion of inv. The chain is Transposon Tn552 DNA-invertase BinR (resR) from Staphylococcus aureus.